A 1058-amino-acid chain; its full sequence is Ubiquitin-like modifier-activating enzyme 1 Y (1058 aa).

Positions M1–S22 are disordered. ATP contacts are provided by residues A477, D503, R514, K527, and D575–N576. The Glycyl thioester intermediate role is filled by C631.

The protein belongs to the ubiquitin-activating E1 family. As to quaternary structure, monomer. As to expression, expressed in testis in A spermatogonia and spermatids but not (or at very low levels) in pachytene spermatocytes. Also expressed in Y-bearing ovaries and at very low levels in adrenal gland.

The enzyme catalyses ATP + ubiquitin + [E1 ubiquitin-activating enzyme]-L-cysteine = AMP + diphosphate + S-ubiquitinyl-[E1 ubiquitin-activating enzyme]-L-cysteine.. It participates in protein modification; protein ubiquitination. In terms of biological role, activates ubiquitin by first adenylating its C-terminal glycine residue with ATP, and thereafter linking this residue to the side chain of a cysteine residue in E1, yielding a ubiquitin-E1 thioester and free AMP. The Y chromosome form could be involved in the survival and proliferation of differentiating spermatogonia. The sequence is that of Ubiquitin-like modifier-activating enzyme 1 Y (Uba1y) from Mus musculus (Mouse).